Consider the following 88-residue polypeptide: Small integral membrane protein 13 (88 aa).

The chain crosses the membrane as a helical span at residues 10–30 (LVFVATLLIVLLLMVCGWYFV). Residues 48–61 (TGSQEGDNEQPSGS) are compositionally biased toward polar residues. A disordered region spans residues 48 to 88 (TGSQEGDNEQPSGSETEEDPSASPQKIRSARQRRPPVDAGH). Residues Ser-59 and Ser-61 each carry the phosphoserine modification. Residue Thr-63 is modified to Phosphothreonine. Position 70 is a phosphoserine (Ser-70).

The protein belongs to the SMIM13 family.

The protein resides in the membrane. This Mus musculus (Mouse) protein is Small integral membrane protein 13 (Smim13).